Consider the following 644-residue polypeptide: 3D-(3,5/4)-trihydroxycyclohexane-1,2-dione hydrolase (644 aa).

Glu65 is a thiamine diphosphate binding site. The tract at residues 442–522 (SLPGDLHKVW…INILLFDNAG (81 aa)) is thiamine pyrophosphate binding. Mg(2+)-binding residues include Asp493 and Asn520.

This sequence belongs to the TPP enzyme family. Mg(2+) serves as cofactor. Thiamine diphosphate is required as a cofactor.

It carries out the reaction 3D-3,5/4-trihydroxycyclohexane-1,2-dione + H2O = 5-deoxy-D-glucuronate + H(+). The protein operates within polyol metabolism; myo-inositol degradation into acetyl-CoA; acetyl-CoA from myo-inositol: step 3/7. Functionally, involved in the cleavage of the C1-C2 bond of 3D-(3,5/4)-trihydroxycyclohexane-1,2-dione (THcHDO) to yield 5-deoxy-glucuronate (5DG). The sequence is that of 3D-(3,5/4)-trihydroxycyclohexane-1,2-dione hydrolase from Clostridium tetani (strain Massachusetts / E88).